Consider the following 310-residue polypeptide: p-hydroxybenzoic acid efflux pump subunit AaeA (310 aa).

The chain crosses the membrane as a helical span at residues 12 to 32 (AITVILVILAFVAIFRAWVYY).

It belongs to the membrane fusion protein (MFP) (TC 8.A.1) family.

The protein resides in the cell inner membrane. Its function is as follows. Forms an efflux pump with AaeB. This is p-hydroxybenzoic acid efflux pump subunit AaeA from Klebsiella pneumoniae (strain 342).